Consider the following 78-residue polypeptide: Large ribosomal subunit protein bL28 (78 aa).

The tract at residues 1–24 is disordered; it reads MSKVCQVTGKRPASGNNVSHAHNK.

The protein belongs to the bacterial ribosomal protein bL28 family.

In Nitrosococcus oceani (strain ATCC 19707 / BCRC 17464 / JCM 30415 / NCIMB 11848 / C-107), this protein is Large ribosomal subunit protein bL28.